Consider the following 439-residue polypeptide: Branched-chain amino acid permease BrnQ (439 aa).

The Cytoplasmic portion of the chain corresponds to 1–9 (MTHQLKSRD). A helical membrane pass occupies residues 10 to 30 (IIALGFMTFALFVGAGNIIFP). Residues 31–43 (PMVGLQAGEHVWT) are Periplasmic-facing. Residues 44-64 (AAIGFLITAVGLPVLTVVALA) form a helical membrane-spanning segment. The Cytoplasmic portion of the chain corresponds to 65-79 (KVGGGVDSLSTPIGK). The chain crosses the membrane as a helical span at residues 80–100 (VAGLLLATVCYLAVGPLFATP). Residues 101-118 (RTATVSFEVGIAPLTGDS) lie on the Periplasmic side of the membrane. The chain crosses the membrane as a helical span at residues 119–139 (AMPLLIYSVVYFAIVILVSLY). Over 140–149 (PGKLLDTVGN) the chain is Cytoplasmic. The helical transmembrane segment at 150–170 (FLAPLKIIALVILSVAAIVWP) threads the bilayer. The Periplasmic portion of the chain corresponds to 171 to 189 (AGPISNALDAYQNAAFSNG). A helical transmembrane segment spans residues 190–210 (FVNGYLTMDTLGAMVFGIVIV). Topologically, residues 211–226 (NAARSRGVTEARLLTR) are cytoplasmic. Residues 227–247 (YTVWAGLMAGVGLTLLYLALF) form a helical membrane-spanning segment. The Periplasmic segment spans residues 248 to 277 (RLGSDSATLVDQSANGAAILHAYVQHTFGG). Residues 278-298 (AGSFLLAALIFIACLVTAVGL) traverse the membrane as a helical segment. Residues 299–316 (TCACAEFFAQYIPLSYRT) lie on the Cytoplasmic side of the membrane. A helical membrane pass occupies residues 317–337 (LVFILGGFSMVVSNLGLSHLI). A topological domain (periplasmic) is located at residue Gln-338. Residues 339–359 (ISIPVLTAIYPPCIALVVLSF) traverse the membrane as a helical segment. Over 360-369 (TRSWWHNSTR) the chain is Cytoplasmic. The helical transmembrane segment at 370–390 (IIAPAMFISLLFGILDGIKAS) threads the bilayer. The Periplasmic segment spans residues 391 to 404 (AFGDMLPAWSQRLP). A helical transmembrane segment spans residues 405–425 (LAEQGLAWLMPTVVMVILAII). The Cytoplasmic portion of the chain corresponds to 426-439 (WDRAAGRQVTSSAH).

This sequence belongs to the branched chain amino acid transporter family.

The protein localises to the cell inner membrane. Functionally, liv-II branched chain amino acid transport system, which transports leucine, valine and isoleucine. The sequence is that of Branched-chain amino acid permease BrnQ from Salmonella typhimurium (strain LT2 / SGSC1412 / ATCC 700720).